We begin with the raw amino-acid sequence, 600 residues long: Lamin-B2 (600 aa).

The tract at residues 2-27 is head; sequence SGTPIRGTPGGTPLSPTRISRLQEKE. The residue at position 16 (serine 16) is a Phosphoserine; by CDK1. The IF rod domain maps to 25–381; that stretch reads EKEELRQLND…KLLEGEEERL (357 aa). The interval 28–64 is coil 1A; that stretch reads ELRQLNDRLAVYIDRVRALELENDRLLVKISEKEEVT. The coil 1B stretch occupies residues 75–212; the sequence is YESELADARR…NVFEEEIRET (138 aa). The interval 237-379 is coil 2; that stretch reads QALEDLRNQH…YRKLLEGEEE (143 aa). Disordered stretches follow at residues 377–449 and 568–600; these read EEER…QMSQ and ENEE…CLVM. The interval 380 to 600 is tail; sequence RLKLSPSPSS…RTTSRGCLVM (221 aa). Residues 383–410 show a composition bias toward low complexity; it reads LSPSPSSRVTVSRATSSSSSSSTSLVRS. Serine 386 bears the Phosphoserine mark. Residues 414 to 419 carry the Nuclear localization signal motif; that stretch reads KRRRIE. In terms of domain architecture, LTD spans 445 to 562; that stretch reads FQMSQQASAT…EEVAVRTVTK (118 aa). Residues 569 to 583 show a composition bias toward acidic residues; sequence NEEEEDEADFGEEDL. Over residues 584–600 the composition is skewed to polar residues; that stretch reads FNQQGDPRTTSRGCLVM. Cysteine 597 carries the post-translational modification Cysteine methyl ester. Residue cysteine 597 is the site of S-farnesyl cysteine attachment. A propeptide spans 598–600 (removed in mature form); it reads LVM.

Belongs to the intermediate filament family. Homodimer. Lamin dimers then assemble into dimeric head-to-tail polymers. Ultimately, two head-to-tail polymers assemble laterally into a protofilament with a uniformly shaped rod of 3.5 nm in diameter. Post-translationally, phosphorylation plays a key role in lamin organization, subcellular localization and nuclear envelope disintegration. Phosphorylation by CDK1 at Ser-16 at the onset of mitosis drives lamin disassembly and nuclear envelope breakdown.

The protein localises to the nucleus lamina. The protein resides in the nucleus envelope. It is found in the nucleus. It localises to the nucleoplasm. Its subcellular location is the nucleus matrix. In terms of biological role, lamins are intermediate filament proteins that assemble into a filamentous meshwork, and which constitute the major components of the nuclear lamina, a fibrous layer on the nucleoplasmic side of the inner nuclear membrane. Lamins provide a framework for the nuclear envelope, bridging the nuclear envelope and chromatin. Plays an important role in nuclear assembly, chromatin organization, nuclear membrane and telomere dynamics. In Gallus gallus (Chicken), this protein is Lamin-B2 (LMNB2).